A 299-amino-acid chain; its full sequence is Endonuclease G, mitochondrial (299 aa).

The transit peptide at 1 to 48 directs the protein to the mitochondrion; sequence MQLLRAGLTLALGAGLGAAAESWWRQRADARATPGLLSRLPVLPVAAA. A Phosphothreonine modification is found at threonine 130. Histidine 143 serves as the catalytic Proton acceptor. Position 174 (asparagine 174) interacts with Mg(2+). The segment at 288 to 298 is essential for deoxyribonuclease activity; sequence AGSLKAITAGS. Serine 290 bears the Phosphoserine mark.

Belongs to the DNA/RNA non-specific endonuclease family. As to quaternary structure, homodimer; disulfide-linked. Homodimerization is essential for its activity. Interacts with YWHAG. It depends on Mg(2+) as a cofactor. In terms of processing, GSK3-beta-mediated dual phosphorylations at Thr-130 and Ser-290 is necessary for its interaction with YWHAG and the induction of autophagy.

The protein resides in the mitochondrion. Endonuclease that preferentially catalyzes the cleavage of double-stranded 5-hydroxymethylcytosine (5hmC)-modified DNA. The 5hmC-modified nucleotide does not increase the binding affinity, but instead increases the efficiency of cutting and specifies the site of cleavage for the modified DNAs. Shows significantly higher affinity for four- stranded Holliday junction over duplex and single-stranded DNAs. Promotes conservative recombination when the DNA is 5hmC-modified. Promotes autophagy through the suppression of mTOR by its phosphorylation-mediated interaction with YWHAG and its endonuclease activity-mediated DNA damage response. GSK3-beta mediated phosphorylation of ENDOG enhances its interaction with YWHAG, leading to the release of TSC2 and PIK3C3 from YWHAG resulting in mTOR pathway suppression and autophagy initiation. Promotes cleavage of mtDNA in response to oxidative and nitrosative stress, in turn inducing compensatory mtDNA replication. In Bos taurus (Bovine), this protein is Endonuclease G, mitochondrial (ENDOG).